Consider the following 632-residue polypeptide: Putative golgin subfamily A member 8I (632 aa).

A disordered region spans residues 1-77 (MAEETQHNKL…SSATLKDLES (77 aa)). Residues 38–50 (TNGSIPQTATSGG) are compositionally biased toward polar residues. Coiled-coil stretches lie at residues 86 to 154 (LDSR…HMKR) and 209 to 421 (KLEQ…SLMA). Positions 352–362 (KQEERIQEQHK) are enriched in basic and acidic residues. 4 disordered regions span residues 352 to 383 (KQEERIQEQHKSLQQLAKPQSVFEEPNNENKS), 423 to 445 (PGEGHGGEHLDSEGEEAPQPMPS), 496 to 524 (LSEPGGRAKDAALGGGHHQAGAQGGDEGE), and 550 to 569 (AHNPADEPGPGAPAPQELGA). Residues 508 to 520 (LGGGHHQAGAQGG) are compositionally biased toward gly residues. The golgi-targeting domain stretch occupies residues 529–632 (AADGIAAYSN…CWAWLPRRRR (104 aa)). The segment covering 555 to 568 (DEPGPGAPAPQELG) has biased composition (low complexity).

This sequence belongs to the GOLGA8 family.

The protein localises to the golgi apparatus. It localises to the golgi stack membrane. Its function is as follows. May be involved in maintaining Golgi structure. The protein is Putative golgin subfamily A member 8I of Homo sapiens (Human).